A 274-amino-acid chain; its full sequence is Diaminopimelate epimerase (274 aa).

Residues Asn11, Gln44, and Asn64 each contribute to the substrate site. Catalysis depends on Cys73, which acts as the Proton donor. Substrate-binding positions include 74–75 (GN), Asn157, Asn190, and 208–209 (ER). Residue Cys217 is the Proton acceptor of the active site. 218-219 (GS) is a substrate binding site.

Belongs to the diaminopimelate epimerase family. As to quaternary structure, homodimer.

It localises to the cytoplasm. The catalysed reaction is (2S,6S)-2,6-diaminopimelate = meso-2,6-diaminopimelate. The protein operates within amino-acid biosynthesis; L-lysine biosynthesis via DAP pathway; DL-2,6-diaminopimelate from LL-2,6-diaminopimelate: step 1/1. Catalyzes the stereoinversion of LL-2,6-diaminopimelate (L,L-DAP) to meso-diaminopimelate (meso-DAP), a precursor of L-lysine and an essential component of the bacterial peptidoglycan. The protein is Diaminopimelate epimerase of Actinobacillus pleuropneumoniae serotype 3 (strain JL03).